Reading from the N-terminus, the 180-residue chain is uncharacterized protein (180 aa).

Positions 114–147 form a coiled coil; it reads EDIYEDIVDVRLENQSLEEQLEDFKECSRALKKY.

It belongs to the mimivirus L74/L77/R857 family.

This is an uncharacterized protein from Acanthamoeba polyphaga mimivirus (APMV).